Here is a 189-residue protein sequence, read N- to C-terminus: Molybdenum cofactor guanylyltransferase (189 aa).

GTP is bound by residues 10–12, Lys23, Asn51, Asp69, and Asp99; that span reads LAG. Asp99 contacts Mg(2+).

This sequence belongs to the MobA family. Monomer. Mg(2+) is required as a cofactor.

The protein resides in the cytoplasm. The catalysed reaction is Mo-molybdopterin + GTP + H(+) = Mo-molybdopterin guanine dinucleotide + diphosphate. In terms of biological role, transfers a GMP moiety from GTP to Mo-molybdopterin (Mo-MPT) cofactor (Moco or molybdenum cofactor) to form Mo-molybdopterin guanine dinucleotide (Mo-MGD) cofactor. The protein is Molybdenum cofactor guanylyltransferase of Pasteurella multocida (strain Pm70).